A 516-amino-acid chain; its full sequence is MNVFFMFSLLFLAALGSCAHDRNPLEECFRETDYEEFLEIAKNGLTATSNPKRVVIVGAGMAGLSAAYVLAGAGHQVTVLEASERVGGRVRTYRKKDWYANLGPMRLPTKHRIVREYIKKFDLKLNEFSQENENAWYFIKNIRKRVREVKNNPGLLEYPVKPSEEGKSAAQLYVESLRKVVEELRSTNCKYILDKYDTYSTKEYLLKEGNLSPGAVDMIGDLLNEDSGYYVSFIESLKHDDIFGYEKRFDEIVGGMDQLPTSMYEAIKEKVQVHFNARVIEIQQNDREATVTYQTSANEMSSVTADYVIVCTTSRAARRIKFEPPLPPKKAHALRSVHYRSGTKIFLTCTKKFWEDDGIHGGKSTTDLPSRFIYYPNHNFTSGVGVIIAYGIGDDANFFQALDFKDCADIVINDLSLIHELPKEDIQTFCHPSMIQRWSLDKYAMGGITTFTPYQFQHFSEALTAPFKRIYFAGEYTAQFHGWIDSTIKSGLTAARDVNRASENPSGIHLSNDNEF.

The signal sequence occupies residues 1-18; the sequence is MNVFFMFSLLFLAALGSC. A disulfide bridge links C28 with C189. FAD contacts are provided by residues 61–62, 81–82, R89, and 103–106; these read MA, EA, and GPMR. Substrate is bound by residues R106 and H239. Residue V279 coordinates FAD. An intrachain disulfide couples C349 to C430. N379 is a glycosylation site (N-linked (GlcNAc...) asparagine). Position 390 (Y390) interacts with substrate. FAD contacts are provided by residues E475 and 482 to 487; that span reads GWIDST. A substrate-binding site is contributed by 482 to 483; the sequence is GW.

Belongs to the flavin monoamine oxidase family. FIG1 subfamily. Homodimer; non-covalently linked. It depends on FAD as a cofactor. Post-translationally, N-glycosylated. In terms of tissue distribution, expressed by the venom gland.

The protein resides in the secreted. The catalysed reaction is an L-alpha-amino acid + O2 + H2O = a 2-oxocarboxylate + H2O2 + NH4(+). It catalyses the reaction L-leucine + O2 + H2O = 4-methyl-2-oxopentanoate + H2O2 + NH4(+). The enzyme catalyses L-phenylalanine + O2 + H2O = 3-phenylpyruvate + H2O2 + NH4(+). It carries out the reaction L-methionine + O2 + H2O = 4-methylsulfanyl-2-oxobutanoate + H2O2 + NH4(+). The catalysed reaction is L-arginine + O2 + H2O = 5-guanidino-2-oxopentanoate + H2O2 + NH4(+). Catalyzes an oxidative deamination of predominantly hydrophobic and aromatic L-amino acids, thus producing hydrogen peroxide that may contribute to the diverse toxic effects of this enzyme. Is active on L-Arg, L-Phe, L-Met, and L-Leu and is weakly active on L-Val. Exhibits diverse biological activities, such as hemorrhage, hemolysis, edema, apoptosis of vascular endothelial cells or tumor cell lines, antibacterial and antiparasitic activities, as well as regulation of platelet aggregation. Its effect on platelets is controversial, since it either induces aggregation or inhibits agonist-induced aggregation. These different effects are probably due to different experimental conditions. The protein is L-amino-acid oxidase of Crotalus adamanteus (Eastern diamondback rattlesnake).